We begin with the raw amino-acid sequence, 289 residues long: Probable signal peptidase I (289 aa).

Residues 1-53 (MTETTDSVPEPPSDADQLQPKVSICGLDMPAEVSETAAEAAIGVSEPKKRSAL) lie on the Cytoplasmic side of the membrane. Residues 54–74 (WEFAILAVIAIGLYYVMLTFV) traverse the membrane as a helical segment. The Extracellular portion of the chain corresponds to 75-289 (ARPYLIPSES…VGSVNSQQGQ (215 aa)). Catalysis depends on residues S84 and K162.

This sequence belongs to the peptidase S26 family.

It is found in the cell membrane. The enzyme catalyses Cleavage of hydrophobic, N-terminal signal or leader sequences from secreted and periplasmic proteins.. In Mycobacterium leprae (strain TN), this protein is Probable signal peptidase I (lepB).